We begin with the raw amino-acid sequence, 461 residues long: Argininosuccinate lyase (461 aa).

It belongs to the lyase 1 family. Argininosuccinate lyase subfamily.

It localises to the cytoplasm. It catalyses the reaction 2-(N(omega)-L-arginino)succinate = fumarate + L-arginine. The protein operates within amino-acid biosynthesis; L-arginine biosynthesis; L-arginine from L-ornithine and carbamoyl phosphate: step 3/3. The sequence is that of Argininosuccinate lyase from Chlorobium chlorochromatii (strain CaD3).